A 143-amino-acid chain; its full sequence is Ribosome maturation factor RimP (143 aa).

Belongs to the RimP family.

It is found in the cytoplasm. Its function is as follows. Required for maturation of 30S ribosomal subunits. In Neisseria meningitidis serogroup C / serotype 2a (strain ATCC 700532 / DSM 15464 / FAM18), this protein is Ribosome maturation factor RimP.